We begin with the raw amino-acid sequence, 1272 residues long: AF4/FMR2 family member 2 (1272 aa).

Disordered stretches follow at residues 93–183 (IPKN…LTQD), 201–225 (QIGE…GEDA), and 283–302 (AYVR…PTLK). A compositionally biased stretch (polar residues) spans 97-107 (SVPQNPNNKNE). Residues 151–160 (SKPEWSRDSH) show a composition bias toward basic and acidic residues. Residues 161-183 (NPSTVLASQASGQPNKMQTLTQD) are compositionally biased toward polar residues. A Phosphoserine modification is found at Ser391. Disordered stretches follow at residues 418–491 (KAKP…KWQL), 535–687 (TNAS…DQEE), 779–829 (SLHA…PEKK), and 842–903 (PPCI…QDKN). Over residues 426–438 (VNPPLATPQPPPA) the composition is skewed to pro residues. Low complexity predominate over residues 439-452 (VQASGGSGSSSESE). Thr478 carries the phosphothreonine modification. The segment covering 543–558 (EPKERPLLSLIREKAR) has biased composition (basic and acidic residues). Residues 576-586 (STTSETVSQRT) are compositionally biased toward polar residues. Residues 616 to 629 (PKEKESVELHDPPR) are compositionally biased toward basic and acidic residues. Residues 630–640 (GRNKATAHKPA) show a composition bias toward basic residues. The span at 818-829 (PTEVAEKIPEKK) shows a compositional bias: basic and acidic residues. Composition is skewed to pro residues over residues 844-853 (CISPAPPHKP) and 874-883 (FPPPLSPLPE).

Belongs to the AF4 family.

The protein localises to the nucleus speckle. In terms of biological role, RNA-binding protein. Might be involved in alternative splicing regulation through an interaction with G-quartet RNA structure. The chain is AF4/FMR2 family member 2 (AFF2) from Pan troglodytes (Chimpanzee).